We begin with the raw amino-acid sequence, 406 residues long: MKKKLILVLNCGSSSVKFSIIDVIEGVLYISGIANTINNVSFLKIYDIKKKIKIVKKNISTDSYKKLILLICDLLFIHFNKYLKLIIGIGHRIVHGGKDIKKSMIINKKILLKIKKSAIFAPLHNPYHLIAIKIILNKFVKLKNRNVAVFDTSFHQTMPKKSFLYGIPYSFYKKYSIRKYGAHGINHFYITHECSLFLKKSTNNLNIISCHLGSGSSITAIVNGKSIDTSMGLTPLEGLVMGTRCGDIDPYIIIYMIKKLNFSITQIQKILTKSSGVLGISSITSDFRELEKKYYSHKKAKLAIDIFCRRVSKYIAGYSSLMPKGKLDAIVFTGGIGENSSFIRKKIIKNLSIIGFFLDIEKNLIKTGNNNRFIHTINSKPILVIPADENKIIAKETYNILIKNNF.

Asn10 contacts Mg(2+). Lys17 lines the ATP pocket. Residue Arg92 participates in substrate binding. Asp151 (proton donor/acceptor) is an active-site residue. Residues 211–215, 286–288, and 335–339 each bind ATP; these read HLGSG, DFR, and GIGEN. Residue Glu389 participates in Mg(2+) binding.

It belongs to the acetokinase family. Homodimer. Requires Mg(2+) as cofactor. Mn(2+) is required as a cofactor.

It localises to the cytoplasm. It catalyses the reaction acetate + ATP = acetyl phosphate + ADP. The protein operates within metabolic intermediate biosynthesis; acetyl-CoA biosynthesis; acetyl-CoA from acetate: step 1/2. In terms of biological role, catalyzes the formation of acetyl phosphate from acetate and ATP. Can also catalyze the reverse reaction. The sequence is that of Acetate kinase from Buchnera aphidicola subsp. Cinara cedri (strain Cc).